The following is a 334-amino-acid chain: Fructose-1,6-bisphosphatase class 1 (334 aa).

The Mg(2+) site is built by glutamate 90, aspartate 113, leucine 115, and aspartate 116. Substrate-binding positions include 116-119 (DGSS), asparagine 209, tyrosine 242, and lysine 272. Glutamate 278 provides a ligand contact to Mg(2+).

The protein belongs to the FBPase class 1 family. Homotetramer. The cofactor is Mg(2+).

Its subcellular location is the cytoplasm. It carries out the reaction beta-D-fructose 1,6-bisphosphate + H2O = beta-D-fructose 6-phosphate + phosphate. It participates in carbohydrate biosynthesis; gluconeogenesis. The chain is Fructose-1,6-bisphosphatase class 1 from Actinobacillus pleuropneumoniae serotype 7 (strain AP76).